The primary structure comprises 256 residues: Thiazole synthase (256 aa).

Residue Lys-95 is the Schiff-base intermediate with DXP of the active site. Residues Gly-156, 182–183 (AG), and 204–205 (NT) contribute to the 1-deoxy-D-xylulose 5-phosphate site.

It belongs to the ThiG family. Homotetramer. Forms heterodimers with either ThiH or ThiS.

The protein localises to the cytoplasm. The enzyme catalyses [ThiS sulfur-carrier protein]-C-terminal-Gly-aminoethanethioate + 2-iminoacetate + 1-deoxy-D-xylulose 5-phosphate = [ThiS sulfur-carrier protein]-C-terminal Gly-Gly + 2-[(2R,5Z)-2-carboxy-4-methylthiazol-5(2H)-ylidene]ethyl phosphate + 2 H2O + H(+). The protein operates within cofactor biosynthesis; thiamine diphosphate biosynthesis. Its function is as follows. Catalyzes the rearrangement of 1-deoxy-D-xylulose 5-phosphate (DXP) to produce the thiazole phosphate moiety of thiamine. Sulfur is provided by the thiocarboxylate moiety of the carrier protein ThiS. In vitro, sulfur can be provided by H(2)S. This chain is Thiazole synthase, found in Escherichia coli O7:K1 (strain IAI39 / ExPEC).